We begin with the raw amino-acid sequence, 592 residues long: Methylenetetrahydrofolate reductase (NADH) 1 (592 aa).

E21 serves as the catalytic Proton donor/acceptor. NAD(+) is bound by residues E21–K26 and T52–W53. FAD is bound by residues T52–W53, H81, R111–D113, Y153, H157–V160, D175, and K182. Residue D113 coordinates substrate. The substrate site is built by Q193 and Y285.

Belongs to the methylenetetrahydrofolate reductase family. Homodimer. Requires FAD as cofactor.

It carries out the reaction (6S)-5-methyl-5,6,7,8-tetrahydrofolate + NAD(+) = (6R)-5,10-methylene-5,6,7,8-tetrahydrofolate + NADH + H(+). It functions in the pathway one-carbon metabolism; tetrahydrofolate interconversion. Its activity is regulated as follows. Plant MTHFRs strongly prefer NADH over NADPH. Not inhibited by methionine or S-adenosylmethionine. In terms of biological role, the probable reversibility of the MTHFR reaction in plants suggests that they can metabolize the methyl group of 5,10-methylenetetrahydrofolate to serine, sugars and starch. The polypeptide is Methylenetetrahydrofolate reductase (NADH) 1 (MTHFR1) (Arabidopsis thaliana (Mouse-ear cress)).